Here is a 126-residue protein sequence, read N- to C-terminus: Nascent polypeptide-associated complex protein (126 aa).

Positions 10 to 77 constitute an NAC-A/B domain; it reads PRMMKQMQKM…AKKVAKEEEK (68 aa).

It belongs to the NAC-alpha family. Homodimer. Interacts with the ribosome. Binds ribosomal RNA.

In terms of biological role, contacts the emerging nascent chain on the ribosome. This is Nascent polypeptide-associated complex protein from Methanococcus maripaludis (strain C7 / ATCC BAA-1331).